Consider the following 706-residue polypeptide: Acyl-coenzyme A oxidase (706 aa).

The tract at residues 682–706 (MLNRPSKEERERFEKSTETAKILSK) is disordered. Residues 686–699 (PSKEERERFEKSTE) are compositionally biased toward basic and acidic residues.

Belongs to the acyl-CoA oxidase family. FAD is required as a cofactor.

The protein localises to the peroxisome. The enzyme catalyses a 2,3-saturated acyl-CoA + O2 = a (2E)-enoyl-CoA + H2O2. Its pathway is lipid metabolism; peroxisomal fatty acid beta-oxidation. The chain is Acyl-coenzyme A oxidase (POX1) from Debaryomyces hansenii (strain ATCC 36239 / CBS 767 / BCRC 21394 / JCM 1990 / NBRC 0083 / IGC 2968) (Yeast).